A 776-amino-acid chain; its full sequence is Protein FAM83C (776 aa).

The DUF1669 stretch occupies residues 1–340 (MQGCQAGASI…LYAESQPVEG (340 aa)). Disordered regions lie at residues 344 to 467 (NEDP…STSP), 494 to 565 (SRLP…SLQH), 617 to 653 (HGQL…DDRR), 669 to 694 (PFRS…VGSA), and 716 to 745 (QGAR…LFAP). The segment covering 368-385 (SATGSSPSSNSLSSIKHS) has biased composition (low complexity). Over residues 452 to 467 (PWSQSSPALNHSSTSP) the composition is skewed to polar residues. Basic and acidic residues predominate over residues 523 to 539 (VEEKKVSLSQSHDHLDR). The segment covering 554-563 (SRVTPDSSSL) has biased composition (polar residues).

It belongs to the FAM83 family. As to quaternary structure, directly interacts (via DUF1669) with CSNK1A1 and CSNK1A1L. May interact with RAF1. Post-translationally, phosphorylated by CSNK1A1.

The protein resides in the cytoplasm. Functionally, may play a role in MAPK signaling. The sequence is that of Protein FAM83C from Mus musculus (Mouse).